Consider the following 657-residue polypeptide: Archaeal Lon protease (657 aa).

At 1-123 (MEENIESVEE…KAEREKRDRS (123 aa)) the chain is on the cytoplasmic side. An ATP-binding site is contributed by 57 to 64 (GEPGTGKS). Residues 124–144 (RSIMFVIFSVVLLGIIAAIVL) traverse the membrane as a helical segment. Arg-145 is a topological domain (extracellular). The helical transmembrane segment at 146–166 (SITLIFFAIMAAAFLYMAMAF) threads the bilayer. The Cytoplasmic portion of the chain corresponds to 167-657 (NPVIRNERAM…ATTRAGNNAA (491 aa)). The region spanning 433-618 (GSVVGMVNGL…EDVLRVALVN (186 aa)) is the Lon proteolytic domain. Residues Ser-525 and Lys-568 contribute to the active site.

This sequence belongs to the peptidase S16 family. Archaeal LonB subfamily. Homohexamer. Organized in a ring with a central cavity.

The protein localises to the cell membrane. ATP-dependent serine protease that mediates the selective degradation of mutant and abnormal proteins as well as certain short-lived regulatory proteins. Degrades polypeptides processively. In Thermoplasma acidophilum (strain ATCC 25905 / DSM 1728 / JCM 9062 / NBRC 15155 / AMRC-C165), this protein is Archaeal Lon protease.